A 932-amino-acid polypeptide reads, in one-letter code: Leucine--tRNA ligase (932 aa).

Positions 38–48 match the 'HIGH' region motif; sequence PYLNGNLHAGH. Residues 630–634 carry the 'KMSKS' region motif; sequence KMSKS. Lysine 633 contacts ATP.

It belongs to the class-I aminoacyl-tRNA synthetase family.

The protein localises to the cytoplasm. The enzyme catalyses tRNA(Leu) + L-leucine + ATP = L-leucyl-tRNA(Leu) + AMP + diphosphate. This Archaeoglobus fulgidus (strain ATCC 49558 / DSM 4304 / JCM 9628 / NBRC 100126 / VC-16) protein is Leucine--tRNA ligase.